A 242-amino-acid chain; its full sequence is Purine nucleoside phosphorylase SCO2081 (242 aa).

Zn(2+)-binding residues include H68, C106, and H123.

The protein belongs to the purine nucleoside phosphorylase YfiH/LACC1 family. As to quaternary structure, homodimer. The cofactor is Cu(2+). Requires Zn(2+) as cofactor.

The enzyme catalyses adenosine + phosphate = alpha-D-ribose 1-phosphate + adenine. It catalyses the reaction S-methyl-5'-thioadenosine + phosphate = 5-(methylsulfanyl)-alpha-D-ribose 1-phosphate + adenine. The catalysed reaction is inosine + phosphate = alpha-D-ribose 1-phosphate + hypoxanthine. It carries out the reaction adenosine + H2O + H(+) = inosine + NH4(+). Purine nucleoside enzyme that catalyzes the phosphorolysis of adenosine and inosine nucleosides, yielding D-ribose 1-phosphate and the respective free bases, adenine and hypoxanthine. Also catalyzes the phosphorolysis of S-methyl-5'-thioadenosine into adenine and S-methyl-5-thio-alpha-D-ribose 1-phosphate. Also has adenosine deaminase activity. The chain is Purine nucleoside phosphorylase SCO2081 from Streptomyces coelicolor (strain ATCC BAA-471 / A3(2) / M145).